A 277-amino-acid polypeptide reads, in one-letter code: Transport and Golgi organization protein 11 (277 aa).

Over 1-256 the chain is Cytoplasmic; sequence MVTPQSPTPM…NNEQRTQREK (256 aa). 2 disordered regions span residues 124–148 and 167–200; these read HFPSASEESSPIRANGHHLYGNDLD and VARMGFQGNDTNSVESDSQLTTGSASKRSQLNQQ. Phosphoserine occurs at positions 127, 129, 132, and 133. A compositionally biased stretch (polar residues) spans 174 to 200; sequence GNDTNSVESDSQLTTGSASKRSQLNQQ. T177 is modified (phosphothreonine). Phosphoserine is present on residues S179, S182, and S190. 2 positions are modified to phosphothreonine: T216 and T222. A coiled-coil region spans residues 225–253; the sequence is EEILYLRRQLAKLNRRVLNIEINNEQRTQ. Residues 257 to 274 form a helical; Anchor for type IV membrane protein membrane-spanning segment; that stretch reads IVYCLGLAYFVLKTIFWL. Residues 275-277 lie on the Lumenal side of the membrane; that stretch reads NRN.

Belongs to the Tango11 family.

It is found in the endoplasmic reticulum membrane. It localises to the mitochondrion outer membrane. The protein localises to the peroxisome. Its function is as follows. May play a role in mitochondrial and peroxisomal fission. This Drosophila melanogaster (Fruit fly) protein is Transport and Golgi organization protein 11 (Tango11).